Reading from the N-terminus, the 106-residue chain is Nucleoid-associated protein Abu_0429 (106 aa).

The protein belongs to the YbaB/EbfC family. Homodimer.

The protein resides in the cytoplasm. It localises to the nucleoid. Functionally, binds to DNA and alters its conformation. May be involved in regulation of gene expression, nucleoid organization and DNA protection. This Aliarcobacter butzleri (strain RM4018) (Arcobacter butzleri) protein is Nucleoid-associated protein Abu_0429.